The sequence spans 229 residues: Large ribosomal subunit protein uL1 (229 aa).

This sequence belongs to the universal ribosomal protein uL1 family. Part of the 50S ribosomal subunit.

In terms of biological role, binds directly to 23S rRNA. The L1 stalk is quite mobile in the ribosome, and is involved in E site tRNA release. Protein L1 is also a translational repressor protein, it controls the translation of the L11 operon by binding to its mRNA. The chain is Large ribosomal subunit protein uL1 from Caulobacter sp. (strain K31).